We begin with the raw amino-acid sequence, 102 residues long: uncharacterized protein (102 aa).

This is an uncharacterized protein from Methanocaldococcus jannaschii (strain ATCC 43067 / DSM 2661 / JAL-1 / JCM 10045 / NBRC 100440) (Methanococcus jannaschii).